The primary structure comprises 379 residues: Homoserine O-succinyltransferase (379 aa).

The AB hydrolase-1 domain maps to 51-360 (NAVLICHALS…DAPQGHDAFL (310 aa)). Catalysis depends on serine 157, which acts as the Nucleophile. Arginine 227 serves as a coordination point for substrate. Catalysis depends on residues aspartate 323 and histidine 356. Substrate is bound at residue aspartate 357.

It belongs to the AB hydrolase superfamily. MetX family. As to quaternary structure, homodimer.

The protein localises to the cytoplasm. The catalysed reaction is L-homoserine + succinyl-CoA = O-succinyl-L-homoserine + CoA. Its pathway is amino-acid biosynthesis; L-methionine biosynthesis via de novo pathway; O-succinyl-L-homoserine from L-homoserine: step 1/1. Functionally, transfers a succinyl group from succinyl-CoA to L-homoserine, forming succinyl-L-homoserine. The chain is Homoserine O-succinyltransferase from Pseudomonas fluorescens (strain ATCC BAA-477 / NRRL B-23932 / Pf-5).